Consider the following 558-residue polypeptide: Putative cation/proton antiporter YbaL (558 aa).

Topologically, residues 1–3 (MHH) are periplasmic. Residues 4–24 (ATPLITTIVGGLVLAFILGML) form a helical membrane-spanning segment. Residues 25–31 (ANKLRIS) lie on the Cytoplasmic side of the membrane. Residues 32–52 (PLVGYLLAGVLAGPFTPGFVA) traverse the membrane as a helical segment. At 53–55 (DTK) the chain is on the periplasmic side. Residues 56-76 (LAPELAELGVILLMFGVGLHF) traverse the membrane as a helical segment. The Cytoplasmic portion of the chain corresponds to 77-85 (SLKDLMAVK). The helical transmembrane segment at 86–106 (AIAIPGAIAQIAVATLLGMAL) threads the bilayer. Residues 107–112 (SAVLGW) are Periplasmic-facing. A helical membrane pass occupies residues 113–133 (SLMTGIVFGLCLSTASTVVLL). Over 134-148 (RALEERQLIDSQRGQ) the chain is Cytoplasmic. The chain crosses the membrane as a helical span at residues 149 to 169 (IAIGWLIVEDLVMVLTLVLLP). Residues 170 to 185 (AVAGMMEQGDVGFATL) lie on the Periplasmic side of the membrane. The helical transmembrane segment at 186-206 (AVDMGITIGKVIAFIAIMMLV) threads the bilayer. Topologically, residues 207 to 225 (GRRLVPWIMARSAATGSRE) are cytoplasmic. Residues 226–246 (LFTLSVLALALGVAFGAVELF) form a helical membrane-spanning segment. Position 247 (D247) is a topological domain, periplasmic. Residues 248 to 268 (VSFALGAFFAGMVLNESELSH) form a helical membrane-spanning segment. At 269–279 (RAAHDTLPLRD) the chain is on the cytoplasmic side. Residues 280-300 (AFAVLFFVSVGMLFDPLILIQ) traverse the membrane as a helical segment. The Periplasmic portion of the chain corresponds to 301–303 (QPL). Residues 304–324 (AVLATLAIILFGKSLAAFFLV) traverse the membrane as a helical segment. The Cytoplasmic segment spans residues 325–336 (RLFGHSQRTALT). The helical transmembrane segment at 337–357 (IAASLAQIGEFAFILAGLGMA) threads the bilayer. Over 358 to 367 (LNLLPQAGQN) the chain is Periplasmic. Residues 368–388 (LVLAGAILSIMLNPVLFALLE) form a helical membrane-spanning segment. The Cytoplasmic portion of the chain corresponds to 389 to 558 (KYLAKTETLE…TPPAGEVVTG (170 aa)). The RCK N-terminal domain occupies 417-534 (CNHALLVGYG…TERGANQVVM (118 aa)). Residues 427–428 (RV), 447–448 (ET), 467–468 (NA), E494, and R514 contribute to the AMP site.

Belongs to the monovalent cation:proton antiporter 2 (CPA2) transporter (TC 2.A.37) family.

It localises to the cell inner membrane. This is Putative cation/proton antiporter YbaL (ybaL) from Escherichia coli (strain K12).